A 439-amino-acid chain; its full sequence is Hemagglutinin-esterase (439 aa).

An N-terminal signal peptide occupies residues 1–22; the sequence is MGSMCIAMAPRTLLLLIGCQLA. Residues 12–132 form an esterase domain 1 region; that stretch reads TLLLLIGCQL…DNKRWMGNKA (121 aa). Topologically, residues 23 to 407 are virion surface; sequence LGFNEPLNVV…PVCLYDPLPV (385 aa). Ser-45 acts as the Nucleophile in catalysis. A disulfide bridge links Cys-49 with Cys-70. Residues Asn-94, Asn-152, Asn-196, Asn-246, and Asn-316 are each glycosylated (N-linked (GlcNAc...) asparagine; by host). A disulfide bridge connects residues Cys-118 and Cys-167. Residues 133-281 form a receptor binding region; it reads RFYALVYKKM…GNYKAVSLEY (149 aa). 2 disulfide bridges follow: Cys-202/Cys-291 and Cys-210/Cys-264. Residues 282–395 form an esterase domain 2 region; the sequence is LLTIPSKAIC…QCPTAANIEF (114 aa). A disulfide bridge connects residues Cys-322 and Cys-327. Residues Asn-331 and Asn-337 are each glycosylated (N-linked (GlcNAc...) asparagine; by host). Catalysis depends on charge relay system residues Asp-342 and His-345. N-linked (GlcNAc...) asparagine; by host glycosylation is found at Asn-360 and Asn-374. Residues Cys-363 and Cys-387 are joined by a disulfide bond. Residues 408-428 traverse the membrane as a helical segment; sequence ILLGVLLGIAVLIIVFLLFYF. Residues 429-439 are Intravirion-facing; it reads MTDSGVRLHEA.

Belongs to the influenza type C/coronaviruses hemagglutinin-esterase family. Homodimer; disulfide-linked. Forms a complex with the M protein in the pre-Golgi. Associates then with S-M complex to form a ternary complex S-M-HE. In terms of processing, N-glycosylated in the host RER.

The protein localises to the virion membrane. It is found in the host cell membrane. It carries out the reaction N-acetyl-9-O-acetylneuraminate + H2O = N-acetylneuraminate + acetate + H(+). It catalyses the reaction N-acetyl-4-O-acetylneuraminate + H2O = N-acetylneuraminate + acetate + H(+). Structural protein that makes short spikes at the surface of the virus. Contains receptor binding and receptor-destroying activities. Mediates de-O-acetylation of N-acetyl-4-O-acetylneuraminic acid, which is probably the receptor determinant recognized by the virus on the surface of erythrocytes and susceptible cells. This receptor-destroying activity is important for virus release as it probably helps preventing self-aggregation and ensures the efficient spread of the progeny virus from cell to cell. May serve as a secondary viral attachment protein for initiating infection, the spike protein being the major one. May become a target for both the humoral and the cellular branches of the immune system. This is Hemagglutinin-esterase from Puffinosis coronavirus (PV).